A 181-amino-acid polypeptide reads, in one-letter code: Peptide deformylase 2 (181 aa).

Residues Cys-109 and His-151 each contribute to the Fe cation site. The active site involves Glu-152. His-155 lines the Fe cation pocket.

The protein belongs to the polypeptide deformylase family. Requires Fe(2+) as cofactor.

It carries out the reaction N-terminal N-formyl-L-methionyl-[peptide] + H2O = N-terminal L-methionyl-[peptide] + formate. In terms of biological role, removes the formyl group from the N-terminal Met of newly synthesized proteins. Requires at least a dipeptide for an efficient rate of reaction. N-terminal L-methionine is a prerequisite for activity but the enzyme has broad specificity at other positions. The protein is Peptide deformylase 2 of Shewanella oneidensis (strain ATCC 700550 / JCM 31522 / CIP 106686 / LMG 19005 / NCIMB 14063 / MR-1).